The primary structure comprises 616 residues: Homeodomain-interacting protein kinase 4 (616 aa).

Residues 11–347 (YDIIEVLGKG…PSAALRHPFV (337 aa)) enclose the Protein kinase domain. ATP is bound by residues 17–25 (LGKGTFGEV) and Lys-40. Asp-136 serves as the catalytic Proton acceptor. Positions 486-616 (HKARKPPAGS…SFLQHVTGHH (131 aa)) are disordered. Residues 496 to 511 (KSDSNFSNLIRLSQVS) show a composition bias toward polar residues. Residue Ser-511 is modified to Phosphoserine.

The protein belongs to the protein kinase superfamily. CMGC Ser/Thr protein kinase family. HIPK subfamily. Autophosphorylated.

It localises to the cytoplasm. It carries out the reaction L-seryl-[protein] + ATP = O-phospho-L-seryl-[protein] + ADP + H(+). The catalysed reaction is L-threonyl-[protein] + ATP = O-phospho-L-threonyl-[protein] + ADP + H(+). In terms of biological role, protein kinase that phosphorylates human TP53 at Ser-9, and thus induces TP53 repression of BIRC5 promoter. May act as a corepressor of transcription factors (Potential). This chain is Homeodomain-interacting protein kinase 4 (HIPK4), found in Homo sapiens (Human).